Consider the following 486-residue polypeptide: MKSLDDLDFDNRFARLGGAFSTEVLPDPIAEPRLVVASPAALALLDLPAETSDEALFAELFGGHKLWSEAEPRAMVYSGHQFGSYNPRLGDGRGLLLGEVINQAGEHWDLHLKGAGQTPYSRMGDGRAVLRSSIREFLASEALPALGIPSSRALCVIGSSTPVWREKKESAATLLRLAPSHVRFGHFEYFYYTRQHDQLKQLAAFVLEHHFADCNAAERPYAAMFRQVVERNAELIARWQAYGFCHGVMNTDNMSILGITFDYGPYAFLDDFDANHICNHSDDAGRYSFSNQVPIAHWNLAALAQALTPLVEVDELRASLDLFLPLYQAHYLDLMRRRLGLGVAAENDHALVQELLQRMQGSAVDYSLFFRRLGEETPERALASLRDDFVDREAFDRWAEAYRRRVEEEGGDQESRRRRMHAVNPLYVLRNYLAQQAIEAAEQGDYTEVRLLHQVLSRPFEEQPGMERFTRRPPDWGRHLEISCSS.

ATP contacts are provided by G90, G92, R93, K113, D125, G126, R176, and R183. The active-site Proton acceptor is D252. Mg(2+) contacts are provided by N253 and D262. D262 is an ATP binding site.

Belongs to the SELO family. Mg(2+) is required as a cofactor. Mn(2+) serves as cofactor.

The catalysed reaction is L-seryl-[protein] + ATP = 3-O-(5'-adenylyl)-L-seryl-[protein] + diphosphate. It catalyses the reaction L-threonyl-[protein] + ATP = 3-O-(5'-adenylyl)-L-threonyl-[protein] + diphosphate. The enzyme catalyses L-tyrosyl-[protein] + ATP = O-(5'-adenylyl)-L-tyrosyl-[protein] + diphosphate. It carries out the reaction L-histidyl-[protein] + UTP = N(tele)-(5'-uridylyl)-L-histidyl-[protein] + diphosphate. The catalysed reaction is L-seryl-[protein] + UTP = O-(5'-uridylyl)-L-seryl-[protein] + diphosphate. It catalyses the reaction L-tyrosyl-[protein] + UTP = O-(5'-uridylyl)-L-tyrosyl-[protein] + diphosphate. In terms of biological role, nucleotidyltransferase involved in the post-translational modification of proteins. It can catalyze the addition of adenosine monophosphate (AMP) or uridine monophosphate (UMP) to a protein, resulting in modifications known as AMPylation and UMPylation. This chain is Protein nucleotidyltransferase YdiU, found in Pseudomonas aeruginosa (strain ATCC 15692 / DSM 22644 / CIP 104116 / JCM 14847 / LMG 12228 / 1C / PRS 101 / PAO1).